Consider the following 321-residue polypeptide: Lipoyl synthase (321 aa).

7 residues coordinate [4Fe-4S] cluster: Cys-60, Cys-65, Cys-71, Cys-86, Cys-90, Cys-93, and Ser-299. A Radical SAM core domain is found at Trp-72–Leu-288.

It belongs to the radical SAM superfamily. Lipoyl synthase family. [4Fe-4S] cluster serves as cofactor.

It localises to the cytoplasm. The enzyme catalyses [[Fe-S] cluster scaffold protein carrying a second [4Fe-4S](2+) cluster] + N(6)-octanoyl-L-lysyl-[protein] + 2 oxidized [2Fe-2S]-[ferredoxin] + 2 S-adenosyl-L-methionine + 4 H(+) = [[Fe-S] cluster scaffold protein] + N(6)-[(R)-dihydrolipoyl]-L-lysyl-[protein] + 4 Fe(3+) + 2 hydrogen sulfide + 2 5'-deoxyadenosine + 2 L-methionine + 2 reduced [2Fe-2S]-[ferredoxin]. It functions in the pathway protein modification; protein lipoylation via endogenous pathway; protein N(6)-(lipoyl)lysine from octanoyl-[acyl-carrier-protein]: step 2/2. Catalyzes the radical-mediated insertion of two sulfur atoms into the C-6 and C-8 positions of the octanoyl moiety bound to the lipoyl domains of lipoate-dependent enzymes, thereby converting the octanoylated domains into lipoylated derivatives. This Brucella anthropi (strain ATCC 49188 / DSM 6882 / CCUG 24695 / JCM 21032 / LMG 3331 / NBRC 15819 / NCTC 12168 / Alc 37) (Ochrobactrum anthropi) protein is Lipoyl synthase.